Reading from the N-terminus, the 433-residue chain is MVWKVAVFLSAALVIGAVPIDDPEDGGKHWVVIVAGSNGWYNYRHQADACHAYQIIHRNGIPDEQIVVMMYDDIAYSEDNPTPGIVINRPNGTDVYQGVPKDYTGEDVTPQNFLAVLRGDAEAVKGIGSGKVLKSGPQDHVFVYSTDHGSTGILVFPNEDLHVEDLNETIHYMYKHKMYRKMVFYIEACESGSMMNHLPDNINVYATTAANPRESSYACYYDEKRSTYLGDWYSVNWMEDSDVEDLTKETLHKQYHLVKSHTNTSHVMQYGNKTISTMKVMQFQGMKHKASSPISLPPVTHLDLTPSPDVPLTIMKRKLMNTNDLEESRQLTEEIQQHLDARHLIEKSVRKIVSLLAASEAEVEQLLSERAPLTGHSCYPEALLHFRTHCFNWHSPTYEYALRHLYVLVNLCEKPYPLHRIKLSMDHVCLGHY.

Residues 1–17 form the signal peptide; it reads MVWKVAVFLSAALVIGA. An N-linked (GlcNAc...) asparagine glycan is attached at asparagine 91. Residue histidine 148 is part of the active site. Asparagine 167 is a glycosylation site (N-linked (GlcNAc...) asparagine). The Nucleophile role is filled by cysteine 189. N-linked (GlcNAc...) asparagine glycans are attached at residues asparagine 263 and asparagine 272. Positions 324–433 are excised as a propeptide; it reads DLEESRQLTE…SMDHVCLGHY (110 aa). 2 disulfide bridges follow: cysteine 378–cysteine 412 and cysteine 390–cysteine 429.

This sequence belongs to the peptidase C13 family. Homodimer before autocatalytic removal of the propeptide. Monomer after autocatalytic processing. May interact with integrins. In terms of processing, activated by autocatalytic processing at pH 4.

Its subcellular location is the lysosome. It catalyses the reaction Hydrolysis of proteins and small molecule substrates at -Asn-|-Xaa- bonds.. Has a strict specificity for hydrolysis of asparaginyl bonds. Can also cleave aspartyl bonds slowly, especially under acidic conditions. Involved in the processing of proteins for MHC class II antigen presentation in the lysosomal/endosomal system. Also involved in MHC class I antigen presentation in cross-presenting dendritic cells by mediating cleavage and maturation of Perforin-2 (MPEG1), thereby promoting antigen translocation in the cytosol. Required for normal lysosomal protein degradation in renal proximal tubules. Required for normal degradation of internalized EGFR. Plays a role in the regulation of cell proliferation via its role in EGFR degradation. The protein is Legumain (LGMN) of Pongo abelii (Sumatran orangutan).